A 94-amino-acid polypeptide reads, in one-letter code: Integration host factor subunit beta (94 aa).

Belongs to the bacterial histone-like protein family. As to quaternary structure, heterodimer of an alpha and a beta chain.

Its function is as follows. This protein is one of the two subunits of integration host factor, a specific DNA-binding protein that functions in genetic recombination as well as in transcriptional and translational control. This Xanthobacter autotrophicus (strain ATCC BAA-1158 / Py2) protein is Integration host factor subunit beta.